The following is a 251-amino-acid chain: L,D-transpeptidase 1 (251 aa).

The signal sequence occupies residues 1–28 (MRRVVRYLSVVVAITLMLTAESVSIATA). The L,D-TPase catalytic domain maps to 125–250 (LIGVASISAH…VTVGDPIEVV (126 aa)). Substrate-binding positions include tyrosine 190 and 203–204 (SG). The Proton donor/acceptor role is filled by histidine 208. Residue cysteine 226 is the Nucleophile of the active site. Asparagine 228 lines the substrate pocket.

Monomer.

It localises to the periplasm. The protein operates within cell wall biogenesis; peptidoglycan biosynthesis. With respect to regulation, is irreversibly inactivated by the beta-lactams carbapenems via the formation of a covalent adduct resulting from acylation of the catalytic Cys. Its function is as follows. Generates 3-&gt;3 cross-links in peptidoglycan, catalyzing the cleavage of the mDap(3)-D-Ala(4) bond of a tetrapeptide donor stem and the formation of a bond between the carbonyl of mDap(3) of the donor stem and the side chain of mDap(3) of the acceptor stem. Is specific for donor substrates containing a stem tetrapeptide since it cannot use pentapeptide stems. The sequence is that of L,D-transpeptidase 1 (ldtA) from Mycobacterium tuberculosis (strain CDC 1551 / Oshkosh).